A 208-amino-acid chain; its full sequence is ATP-dependent Clp protease proteolytic subunit 1 (208 aa).

Ser108 (nucleophile) is an active-site residue. Residue His133 is part of the active site.

It belongs to the peptidase S14 family. In terms of assembly, fourteen ClpP subunits assemble into 2 heptameric rings which stack back to back to give a disk-like structure with a central cavity, resembling the structure of eukaryotic proteasomes.

It is found in the cytoplasm. It carries out the reaction Hydrolysis of proteins to small peptides in the presence of ATP and magnesium. alpha-casein is the usual test substrate. In the absence of ATP, only oligopeptides shorter than five residues are hydrolyzed (such as succinyl-Leu-Tyr-|-NHMec, and Leu-Tyr-Leu-|-Tyr-Trp, in which cleavage of the -Tyr-|-Leu- and -Tyr-|-Trp bonds also occurs).. Functionally, cleaves peptides in various proteins in a process that requires ATP hydrolysis. Has a chymotrypsin-like activity. Plays a major role in the degradation of misfolded proteins. This is ATP-dependent Clp protease proteolytic subunit 1 from Corynebacterium efficiens (strain DSM 44549 / YS-314 / AJ 12310 / JCM 11189 / NBRC 100395).